The sequence spans 249 residues: Gamma-glutamyl peptidase 3 (249 aa).

Residues 19 to 217 form the Glutamine amidotransferase type-1 domain; that stretch reads SEFVKKTYGG…VDRVLNMKLM (199 aa). Cys103 acts as the Nucleophile in catalysis. Catalysis depends on residues His196 and Glu198.

The protein belongs to the peptidase C26 family.

It localises to the cytoplasm. The protein localises to the cytosol. The enzyme catalyses an S-[(1E)-1-(hydroxyimino)-omega-(methylsulfanyl)alkyl]-L-glutathione + H2O = an S-[(1E)-1-(hydroxyimino)-omega-(methylsulfanyl)alkyl]-L-cysteinylglycine + L-glutamate. The catalysed reaction is (E)-1-(glutathione-S-yl)-2-(1H-indol-3-yl)acetohydroximate + H2O = (E)-1-(glycyl-L-cystein-S-yl)-2-(1H-indol-3-yl)acetohydroximate + L-glutamate. It catalyses the reaction 2-(glutathion-S-yl)-2-(1H-indol-3-yl)acetonitrile + H2O = 2-(glycyl-L-cystein-S-yl)-2-(1H-indol-3-yl)acetonitrile + L-glutamate. It carries out the reaction (Z)-1-(glutathione-S-yl)-2-phenylacetohydroximate + H2O = (Z)-1-(glycyl-L-cystein-S-yl)-2-phenylacetohydroximate + L-glutamate. It functions in the pathway secondary metabolite biosynthesis. In terms of biological role, involved in glucosinolate biosynthesis. Hydrolyzes the gamma-glutamyl peptide bond of several glutathione (GSH) conjugates to produce Cys-Gly conjugates related to glucosinolates. The gamma-Glu-Cys-Gly-GSH conjugates are the sulfur-donating molecule in glucosinolate biosynthesis. Can use the GSH conjugate of the camalexin intermediate IAN (GS-IAN) as substrate. Required for the biosynthesis of camalexin, a pathogen-inducible phytoalexin with antibacterial and antifungal properties. The polypeptide is Gamma-glutamyl peptidase 3 (Arabidopsis thaliana (Mouse-ear cress)).